Consider the following 399-residue polypeptide: Guanine nucleotide-binding protein negative regulator 1 (399 aa).

WD repeat units follow at residues 44-83 (KPLNFFHSSRWSPDGSTILSLTEDQCLNCWNVPFSDLSKK), 105-145 (YSYS…NKAS), 150-194 (DHQE…VMTT), 207-247 (SLKG…PCQL), 252-292 (ERGN…DMVY), and 296-337 (GHRG…EETH).

In terms of assembly, interacts with gpa1.

The protein localises to the cytoplasm. In terms of biological role, negatively regulates the pheromone-response pathway. Acts as a structural mimic of the G protein beta subunit thereby interacting with gpa1 which then inhibits gpa1 signaling. This Schizosaccharomyces pombe (strain 972 / ATCC 24843) (Fission yeast) protein is Guanine nucleotide-binding protein negative regulator 1 (gnr1).